A 679-amino-acid polypeptide reads, in one-letter code: Biosynthetic arginine decarboxylase (679 aa).

Residues 1–43 (MKHRGQEEMGVESTATSDEVVKVPANGNKLEGKNHKQKKLLPT) form a disordered region. An N6-(pyridoxal phosphate)lysine modification is found at Lys149. 331–341 (LDVGGGLGVDY) contacts substrate.

Belongs to the Orn/Lys/Arg decarboxylase class-II family. SpeA subfamily. Requires Mg(2+) as cofactor. Pyridoxal 5'-phosphate serves as cofactor.

The enzyme catalyses L-arginine + H(+) = agmatine + CO2. In terms of biological role, catalyzes the biosynthesis of agmatine from arginine. This chain is Biosynthetic arginine decarboxylase, found in Nostoc sp. (strain PCC 7120 / SAG 25.82 / UTEX 2576).